Here is a 326-residue protein sequence, read N- to C-terminus: N-(2-amino-2-carboxyethyl)-L-glutamate synthase (326 aa).

An N6-(pyridoxal phosphate)lysine modification is found at lysine 47. Pyridoxal 5'-phosphate contacts are provided by residues asparagine 77, serine 185–serine 189, and serine 272.

It belongs to the cysteine synthase/cystathionine beta-synthase family. SbnA subfamily. In terms of assembly, homodimer. Pyridoxal 5'-phosphate serves as cofactor.

It catalyses the reaction O-phospho-L-serine + L-glutamate = N-[(2S)-2-amino-2-carboxyethyl]-L-glutamate + phosphate + H(+). It participates in siderophore biosynthesis. Catalyzes the synthesis of N-((2S)-2-amino-2-carboxyethyl)-L-glutamate (ACEGA) from O-phospho-L-serine and L-glutamate. Involved in the biosynthesis of L-2,3-diaminopropionic acid (L-Dap), a precursor of staphyloferrin B and antibiotics. The sequence is that of N-(2-amino-2-carboxyethyl)-L-glutamate synthase (sbnA) from Staphylococcus aureus (strain N315).